The chain runs to 228 residues: L-ribulose-5-phosphate 4-epimerase UlaF (228 aa).

Residues 26–27, 43–44, and 72–73 each bind substrate; these read GN, SG, and SS. 3 residues coordinate Zn(2+): aspartate 74, histidine 93, and histidine 95. The Proton donor/acceptor role is filled by aspartate 118. Histidine 167 lines the Zn(2+) pocket. Residue tyrosine 225 is the Proton donor/acceptor of the active site.

Belongs to the aldolase class II family. AraD/FucA subfamily. Requires Zn(2+) as cofactor.

The enzyme catalyses L-ribulose 5-phosphate = D-xylulose 5-phosphate. Its pathway is cofactor degradation; L-ascorbate degradation; D-xylulose 5-phosphate from L-ascorbate: step 4/4. Catalyzes the isomerization of L-ribulose 5-phosphate to D-xylulose 5-phosphate. Is involved in the anaerobic L-ascorbate utilization. This Escherichia coli (strain SMS-3-5 / SECEC) protein is L-ribulose-5-phosphate 4-epimerase UlaF.